We begin with the raw amino-acid sequence, 117 residues long: Putative pterin-4-alpha-carbinolamine dehydratase (117 aa).

The protein belongs to the pterin-4-alpha-carbinolamine dehydratase family.

The catalysed reaction is (4aS,6R)-4a-hydroxy-L-erythro-5,6,7,8-tetrahydrobiopterin = (6R)-L-erythro-6,7-dihydrobiopterin + H2O. In Azoarcus sp. (strain BH72), this protein is Putative pterin-4-alpha-carbinolamine dehydratase.